A 236-amino-acid chain; its full sequence is Large ribosomal subunit protein uL1 (236 aa).

It belongs to the universal ribosomal protein uL1 family. In terms of assembly, part of the 50S ribosomal subunit.

In terms of biological role, binds directly to 23S rRNA. The L1 stalk is quite mobile in the ribosome, and is involved in E site tRNA release. Its function is as follows. Protein L1 is also a translational repressor protein, it controls the translation of the L11 operon by binding to its mRNA. This Protochlamydia amoebophila (strain UWE25) protein is Large ribosomal subunit protein uL1.